The chain runs to 460 residues: Elongation factor 1-alpha (460 aa).

Gly-2 carries the n,N,N-trimethylglycine modification. Lys-3 is subject to N6,N6-dimethyllysine; alternate. Lys-3 is modified (N6-methyllysine; alternate). The tr-type G domain occupies 6-241 (KTHINVVVIG…DSIEPPKRPT (236 aa)). Residues 15-22 (GHVDSGKS) form a G1 region. 15–22 (GHVDSGKS) is a GTP binding site. An N6-methyllysine modification is found at Lys-31. Residues 71–75 (GITID) form a G2 region. N6,N6,N6-trimethyllysine is present on Lys-80. The G3 stretch occupies residues 92–95 (DAPG). GTP-binding positions include 92–96 (DAPGH) and 154–157 (NKMD). A G4 region spans residues 154–157 (NKMD). The interval 193–195 (SGF) is G5. Lys-317 carries the N6,N6-dimethyllysine; alternate modification. Lys-317 carries the N6-methyllysine; alternate modification. Position 391 is an N6-methyllysine (Lys-391).

It belongs to the TRAFAC class translation factor GTPase superfamily. Classic translation factor GTPase family. EF-Tu/EF-1A subfamily.

It is found in the cytoplasm. Functionally, this protein promotes the GTP-dependent binding of aminoacyl-tRNA to the A-site of ribosomes during protein biosynthesis. The sequence is that of Elongation factor 1-alpha (TEF) from Podospora anserina (Pleurage anserina).